A 465-amino-acid chain; its full sequence is UDP-N-acetylglucosamine 1-carboxyvinyltransferase (465 aa).

22–23 (KN) lines the phosphoenolpyruvate pocket. Residue arginine 94 participates in UDP-N-acetyl-alpha-D-glucosamine binding. Residue cysteine 119 is the Proton donor of the active site. At cysteine 119 the chain carries 2-(S-cysteinyl)pyruvic acid O-phosphothioketal. The UDP-N-acetyl-alpha-D-glucosamine site is built by aspartate 313 and valine 335.

It belongs to the EPSP synthase family. MurA subfamily.

The protein localises to the cytoplasm. The enzyme catalyses phosphoenolpyruvate + UDP-N-acetyl-alpha-D-glucosamine = UDP-N-acetyl-3-O-(1-carboxyvinyl)-alpha-D-glucosamine + phosphate. It functions in the pathway cell wall biogenesis; peptidoglycan biosynthesis. Functionally, cell wall formation. Adds enolpyruvyl to UDP-N-acetylglucosamine. The chain is UDP-N-acetylglucosamine 1-carboxyvinyltransferase from Protochlamydia amoebophila (strain UWE25).